An 800-amino-acid chain; its full sequence is Phenylalanine--tRNA ligase beta subunit (800 aa).

Residues 39–154 form the tRNA-binding domain; the sequence is TKDIKNLVVG…ESQVPGTDAL (116 aa). One can recognise a B5 domain in the interval 408–483; it reads AFITPIDITA…RIYGYDDIPS (76 aa). Mg(2+)-binding residues include Asp461, Asp467, Glu470, and Glu471. The region spanning 708–800 is the FDX-ACB domain; that stretch reads PRFPGMSRDI…ALIEQGAVIR (93 aa).

Belongs to the phenylalanyl-tRNA synthetase beta subunit family. Type 1 subfamily. In terms of assembly, tetramer of two alpha and two beta subunits. Mg(2+) serves as cofactor.

The protein resides in the cytoplasm. It catalyses the reaction tRNA(Phe) + L-phenylalanine + ATP = L-phenylalanyl-tRNA(Phe) + AMP + diphosphate + H(+). The polypeptide is Phenylalanine--tRNA ligase beta subunit (Staphylococcus aureus (strain Mu50 / ATCC 700699)).